Here is a 208-residue protein sequence, read N- to C-terminus: ATP-dependent Clp protease proteolytic subunit (208 aa).

Ser105 serves as the catalytic Nucleophile. Residue His130 is part of the active site.

It belongs to the peptidase S14 family. Fourteen ClpP subunits assemble into 2 heptameric rings which stack back to back to give a disk-like structure with a central cavity, resembling the structure of eukaryotic proteasomes.

It is found in the cytoplasm. The enzyme catalyses Hydrolysis of proteins to small peptides in the presence of ATP and magnesium. alpha-casein is the usual test substrate. In the absence of ATP, only oligopeptides shorter than five residues are hydrolyzed (such as succinyl-Leu-Tyr-|-NHMec, and Leu-Tyr-Leu-|-Tyr-Trp, in which cleavage of the -Tyr-|-Leu- and -Tyr-|-Trp bonds also occurs).. Functionally, cleaves peptides in various proteins in a process that requires ATP hydrolysis. Has a chymotrypsin-like activity. Plays a major role in the degradation of misfolded proteins. This Xanthomonas campestris pv. campestris (strain 8004) protein is ATP-dependent Clp protease proteolytic subunit.